Consider the following 502-residue polypeptide: Neuronal acetylcholine receptor subunit alpha-7 (502 aa).

An N-terminal signal peptide occupies residues 1–23 (MGLRALMLWLLAAAGLVRESLQG). Topologically, residues 24–233 (EFQRKLYKEL…VTMRRRTLYY (210 aa)) are extracellular. Arginine 42 and valine 44 together coordinate Ca(2+). Asparagine 46, asparagine 90, and asparagine 133 each carry an N-linked (GlcNAc...) asparagine glycan. Cysteine 150 and cysteine 164 are joined by a disulfide. The Ca(2+) site is built by threonine 172 and tyrosine 210. A disulfide bridge connects residues cysteine 212 and cysteine 213. 3 consecutive transmembrane segments (helical) span residues 234–254 (GLNL…VFLL), 262–282 (ISLG…VAEI), and 295–315 (QYFA…VIVL). The Cytoplasmic segment spans residues 316–469 (QYHHHDPDGG…WKFAASVVDR (154 aa)). The chain crosses the membrane as a helical span at residues 470-490 (LCLMAFSVFTIICTIGILMSA).

The protein belongs to the ligand-gated ion channel (TC 1.A.9) family. Acetylcholine receptor (TC 1.A.9.1) subfamily. Alpha-7/CHRNA7 sub-subfamily. In terms of assembly, homopentamer. Can also form heteropentamers with CHRNB2, mainly found in basal forebrain cholinergic neurons.

It localises to the postsynaptic cell membrane. The protein localises to the cell membrane. The enzyme catalyses Ca(2+)(in) = Ca(2+)(out). It carries out the reaction K(+)(in) = K(+)(out). It catalyses the reaction Na(+)(in) = Na(+)(out). The catalysed reaction is choline(out) = choline(in). The enzyme catalyses NH4(+)(in) = NH4(+)(out). It carries out the reaction L-arginine(in) = L-arginine(out). It catalyses the reaction guanidine(out) = guanidine(in). With respect to regulation, activated by a myriad of ligands such as acetylcholine, cytisine, nicotine, choline and epibatidine. Activity is modulated by positive allosteric modulators (PAMs), such as flavonoids, with a wide range of chemical diversity, pharmacological sensitivity and efficacy. AChR activity is inhibited by the antagonists alpha-conotoxons RgIA, ImI and ImII, small disulfide-constrained peptides from cone snails. In terms of biological role, component of neuronal acetylcholine receptors (nAChRs) that function as pentameric, ligand-gated cation channels with high calcium permeability among other activities. nAChRs are excitatory neurotrasnmitter receptors formed by a collection of nAChR subunits known to mediate synaptic transmission in the nervous system and the neuromuscular junction. Each nAchR subunit confers differential attributes to channel properties, including activation, deactivation and desensitization kinetics, pH sensitivity, cation permeability, and binding to allosteric modulators. CHRNA7 is an homooligomeric neuronal acetylcholine receptor abundantly expressed in the central nervous system. Characterized by a fast desensitization and high calcium permeability. Also expressed in non-neuronal cells such as immune cells like lymphocytes, monocytes and macrophages. This Gallus gallus (Chicken) protein is Neuronal acetylcholine receptor subunit alpha-7 (CHRNA7).